The following is an 801-amino-acid chain: Phenylalanine--tRNA ligase beta subunit (801 aa).

Residues 39-153 (ADGLSKLVVG…EEAVPGDAIF (115 aa)) form the tRNA-binding domain. Residues 406–481 (TEPVEVSTSL…RIYGYDKLPT (76 aa)) form the B5 domain. Residues aspartate 459, aspartate 465, glutamate 468, and glutamate 469 each coordinate Mg(2+). The FDX-ACB domain occupies 708-801 (TKFPAMTRDV…LTEQVGAEVR (94 aa)).

Belongs to the phenylalanyl-tRNA synthetase beta subunit family. Type 1 subfamily. Tetramer of two alpha and two beta subunits. Mg(2+) serves as cofactor.

It localises to the cytoplasm. It catalyses the reaction tRNA(Phe) + L-phenylalanine + ATP = L-phenylalanyl-tRNA(Phe) + AMP + diphosphate + H(+). This chain is Phenylalanine--tRNA ligase beta subunit, found in Streptococcus pyogenes serotype M1.